The chain runs to 384 residues: WAT1-related protein At4g08290 (384 aa).

Transmembrane regions (helical) follow at residues 15–35 (LLMI…MATL), 43–63 (VVIV…ALIF), 73–93 (LSVL…DQGF), 104–124 (TYTS…AWIL), 140–160 (IIGT…KGPL), 186–206 (WVVG…FYVL), 219–239 (SLSA…ALVV), 255–275 (FAPL…QGMV), 282–302 (VFVT…ASFI), and 307–327 (IHFG…MVVW). EamA domains follow at residues 25-154 (AGTY…LVMT) and 198-326 (VAWS…YMVV).

It belongs to the drug/metabolite transporter (DMT) superfamily. Plant drug/metabolite exporter (P-DME) (TC 2.A.7.4) family.

Its subcellular location is the membrane. This is WAT1-related protein At4g08290 from Arabidopsis thaliana (Mouse-ear cress).